The primary structure comprises 340 residues: UDP-3-O-(3-hydroxymyristoyl)glucosamine N-acyltransferase (340 aa).

The active-site Proton acceptor is the His-239.

The protein belongs to the transferase hexapeptide repeat family. LpxD subfamily. As to quaternary structure, homotrimer.

It catalyses the reaction a UDP-3-O-[(3R)-3-hydroxyacyl]-alpha-D-glucosamine + a (3R)-hydroxyacyl-[ACP] = a UDP-2-N,3-O-bis[(3R)-3-hydroxyacyl]-alpha-D-glucosamine + holo-[ACP] + H(+). It carries out the reaction UDP-3-O-[(3R)-3-hydroxytetradecanoyl]-alpha-D-glucosamine + (3R)-hydroxytetradecanoyl-[ACP] = UDP-2-N,3-O-bis[(3R)-3-hydroxytetradecanoyl]-alpha-D-glucosamine + holo-[ACP] + H(+). Its pathway is glycolipid biosynthesis; lipid IV(A) biosynthesis; lipid IV(A) from (3R)-3-hydroxytetradecanoyl-[acyl-carrier-protein] and UDP-N-acetyl-alpha-D-glucosamine: step 3/6. In terms of biological role, catalyzes the N-acylation of UDP-3-O-(hydroxytetradecanoyl)glucosamine using 3-hydroxytetradecanoyl-ACP as the acyl donor. Is involved in the biosynthesis of lipid A, a phosphorylated glycolipid that anchors the lipopolysaccharide to the outer membrane of the cell. This is UDP-3-O-(3-hydroxymyristoyl)glucosamine N-acyltransferase from Wigglesworthia glossinidia brevipalpis.